A 526-amino-acid chain; its full sequence is piRNA biogenesis factor prde-1 (526 aa).

The interval 436–526 is disordered; the sequence is EAKEEPIDKK…RRRGCEIRRK (91 aa). The segment covering 439-448 has biased composition (basic and acidic residues); it reads EEPIDKKKDP. Residues 458 to 467 show a composition bias toward basic residues; that stretch reads GKKRRGRKPK. Basic and acidic residues predominate over residues 468–487; that stretch reads KKDDPKMELKDEVKDLKDFV. The segment covering 489–498 has biased composition (low complexity); that stretch reads EESTSASSSA.

Expressed in male and female germ cells.

It localises to the nucleus. Its subcellular location is the chromosome. Nuclear factor required for the production of piwi-interacting RNA (piRNA) precursors. Specifically required for piRNAs produced from loci associated with the Ruby motif. Promotes binding of the transcription factor snpc-4 at piRNA genomic clusters. Required for normal fertility. The sequence is that of piRNA biogenesis factor prde-1 from Caenorhabditis elegans.